Consider the following 603-residue polypeptide: MAKKRDKRLSNINEIKTQIINVKTELKNGVFIFSSPMTIGEFAQKINISGTEIVKEYFLKGKMYTLNHILSEEEIADLCFKHGYDFRVEKEINASNFLDNIEFEDKKEDLETRPPIITIMGHVDHGKTTLIDKIRKSNIVSTESSGITQHTGAYQIIYDNKKITFLDTPGHEAFSAMRARGSKVTDIVILVVAADDGVKPQTKEAIAHAQAANVPIIVFVNKMDKPSKDLNRLKNDLSVSGINLEEWGGDTPIVYGSALKGEGIEKLFENINLQAEILDLKFNPKRHPLGVVIESKMDKGVGSLTTVIVQNGTLHKGDFLVAGPRYGRVKAIYDTNKKPLKKVGAGTPVFVIGLNYAPSAGEKFVGINDEKYAKKLSQEREDSEKQEKFLQQTQTISIRRDNDKKIFNIIIKSDTQGTAEAIKDLILQIANDEIEVIVVSYGIGVINNSDLLLAQTSNSEIIGFNSKPNPNIKQQAEDLNIQINSFDVVYKIVDYLNEKINKMVKPKFEKRTIGRAKILKVFFYSKVGNIAGCLMEEGHVKSDSFVKVYRKNKLIHDGRVETLRKGPDEVKKIEKGFEFGLRIKNFDDIKEDDQLEIIEEFRI.

The region spanning 112 to 279 (TRPPIITIMG…NINLQAEILD (168 aa)) is the tr-type G domain. The G1 stretch occupies residues 121–128 (GHVDHGKT). 121–128 (GHVDHGKT) lines the GTP pocket. Residues 146 to 150 (GITQH) form a G2 region. Positions 167–170 (DTPG) are G3. Residues 167-171 (DTPGH) and 221-224 (NKMD) contribute to the GTP site. The segment at 221-224 (NKMD) is G4. A G5 region spans residues 257–259 (SAL).

Belongs to the TRAFAC class translation factor GTPase superfamily. Classic translation factor GTPase family. IF-2 subfamily.

The protein resides in the cytoplasm. Functionally, one of the essential components for the initiation of protein synthesis. Protects formylmethionyl-tRNA from spontaneous hydrolysis and promotes its binding to the 30S ribosomal subunits. Also involved in the hydrolysis of GTP during the formation of the 70S ribosomal complex. In Mycoplasmopsis pulmonis (strain UAB CTIP) (Mycoplasma pulmonis), this protein is Translation initiation factor IF-2.